We begin with the raw amino-acid sequence, 140 residues long: Transcription antitermination protein NusB (140 aa).

Belongs to the NusB family.

Functionally, involved in transcription antitermination. Required for transcription of ribosomal RNA (rRNA) genes. Binds specifically to the boxA antiterminator sequence of the ribosomal RNA (rrn) operons. The protein is Transcription antitermination protein NusB of Pseudothermotoga lettingae (strain ATCC BAA-301 / DSM 14385 / NBRC 107922 / TMO) (Thermotoga lettingae).